Consider the following 94-residue polypeptide: Large ribosomal subunit protein bL25 (94 aa).

The protein belongs to the bacterial ribosomal protein bL25 family. Part of the 50S ribosomal subunit; part of the 5S rRNA/L5/L18/L25 subcomplex. Contacts the 5S rRNA. Binds to the 5S rRNA independently of L5 and L18.

In terms of biological role, this is one of the proteins that binds to the 5S RNA in the ribosome where it forms part of the central protuberance. This is Large ribosomal subunit protein bL25 from Erwinia tasmaniensis (strain DSM 17950 / CFBP 7177 / CIP 109463 / NCPPB 4357 / Et1/99).